Consider the following 118-residue polypeptide: Vitelline membrane protein Vm32E (118 aa).

Positions 1–17 (MKIVALTLVAFVALAGA) are cleaved as a signal peptide. The VM domain maps to 36–75 (GYPAPPCPTNYLFSCQPNLAPAPCAQEAQAPAYGSAGAYT).

This sequence belongs to the vitelline membrane family.

It is found in the secreted. Major early eggshell protein. The chain is Vitelline membrane protein Vm32E from Drosophila simulans (Fruit fly).